The primary structure comprises 99 residues: Integration host factor subunit alpha (99 aa).

It belongs to the bacterial histone-like protein family. As to quaternary structure, heterodimer of an alpha and a beta chain.

This protein is one of the two subunits of integration host factor, a specific DNA-binding protein that functions in genetic recombination as well as in transcriptional and translational control. This is Integration host factor subunit alpha from Xylella fastidiosa (strain M12).